The primary structure comprises 204 residues: Octanoyltransferase (204 aa).

The region spanning 27 to 202 (QGGEEALLLL…RFQPFLHLHL (176 aa)) is the BPL/LPL catalytic domain. Residues 65–72 (RGGDVTYH), 132–134 (SIG), and 145–147 (GFA) contribute to the substrate site. C163 acts as the Acyl-thioester intermediate in catalysis.

This sequence belongs to the LipB family.

It localises to the cytoplasm. It carries out the reaction octanoyl-[ACP] + L-lysyl-[protein] = N(6)-octanoyl-L-lysyl-[protein] + holo-[ACP] + H(+). The protein operates within protein modification; protein lipoylation via endogenous pathway; protein N(6)-(lipoyl)lysine from octanoyl-[acyl-carrier-protein]: step 1/2. Its function is as follows. Catalyzes the transfer of endogenously produced octanoic acid from octanoyl-acyl-carrier-protein onto the lipoyl domains of lipoate-dependent enzymes. Lipoyl-ACP can also act as a substrate although octanoyl-ACP is likely to be the physiological substrate. The sequence is that of Octanoyltransferase from Geobacter sp. (strain M21).